The following is a 546-amino-acid chain: Chaperonin GroEL (546 aa).

Residues 29-32 (TMGP), Lys-50, 86-90 (DGTTT), Gly-414, and Asp-492 contribute to the ATP site.

The protein belongs to the chaperonin (HSP60) family. As to quaternary structure, forms a cylinder of 14 subunits composed of two heptameric rings stacked back-to-back. Interacts with the co-chaperonin GroES.

Its subcellular location is the cytoplasm. The catalysed reaction is ATP + H2O + a folded polypeptide = ADP + phosphate + an unfolded polypeptide.. Its function is as follows. Together with its co-chaperonin GroES, plays an essential role in assisting protein folding. The GroEL-GroES system forms a nano-cage that allows encapsulation of the non-native substrate proteins and provides a physical environment optimized to promote and accelerate protein folding. In Helicobacter pylori (strain ATCC 700392 / 26695) (Campylobacter pylori), this protein is Chaperonin GroEL.